Consider the following 126-residue polypeptide: Small ribosomal subunit protein uS13c (126 aa).

Residues 97–126 are disordered; that stretch reads PLRGQRTRTNARTRRGGKKTVAGKKKAPRK. Basic residues predominate over residues 101–126; it reads QRTRTNARTRRGGKKTVAGKKKAPRK.

This sequence belongs to the universal ribosomal protein uS13 family. As to quaternary structure, part of the 30S ribosomal subunit.

It is found in the plastid. It localises to the chloroplast. Its function is as follows. Located at the top of the head of the 30S subunit, it contacts several helices of the 16S rRNA. In Pyropia yezoensis (Susabi-nori), this protein is Small ribosomal subunit protein uS13c.